Consider the following 548-residue polypeptide: Probable sucrose-6-phosphate hydrolase (548 aa).

Residues 105–108, Gln-124, 167–168, 228–229, and Glu-283 contribute to the substrate site; these read LLND, FS, and RD. Asp-108 is an active-site residue.

It belongs to the glycosyl hydrolase 32 family.

Its subcellular location is the cytoplasm. The catalysed reaction is Hydrolysis of terminal non-reducing beta-D-fructofuranoside residues in beta-D-fructofuranosides.. It functions in the pathway glycan biosynthesis; sucrose metabolism. Its function is as follows. Enables the bacterium to metabolize sucrose as a sole carbon source. The polypeptide is Probable sucrose-6-phosphate hydrolase (Vibrio cholerae serotype O1 (strain ATCC 39315 / El Tor Inaba N16961)).